Consider the following 170-residue polypeptide: MKSKLPLILINLSLISSPLGANAAKIYTCTINGETVYTTKPSKSCHSTDLPPIGNYSSERYILPQTPEPAPSPSNGGQAVKYKAPVKTVSKPAKSNTPPQQAPVNNSRRSILEAELSNERKALTEAQKMLSQARLAKGGNINHQKINALQSNVLDRQQNIQALQRELGRM.

The N-terminal stretch at 1–23 (MKSKLPLILINLSLISSPLGANA) is a signal peptide. Residues 87 to 107 (KTVSKPAKSNTPPQQAPVNNS) are disordered. Positions 93–107 (AKSNTPPQQAPVNNS) are enriched in polar residues. The stretch at 109–166 (RSILEAELSNERKALTEAQKMLSQARLAKGGNINHQKINALQSNVLDRQQNIQALQRE) forms a coiled coil.

It is found in the periplasm. Required for stabilizing type IV pilus (T4p) in extended, nonretracted conformation on the bacterial cell surface. This is Type IV pilus assembly protein C from Neisseria gonorrhoeae (strain ATCC 700825 / FA 1090).